The primary structure comprises 65 residues: Lantipeptide Flvbeta.h (65 aa).

A propeptide spans 1–27 (cleaved by FlvT); it reads MERYGHLAGVIPVDEIDDMFESNVIGG. Position 28 is a 2,3-didehydrobutyrine; by FlvM2 (T28). Positions 29-33 form a cross-link, lanthionine (Ser-Cys); by FlvM2; it reads SSIDC. Residue S30 is modified to 2,3-didehydroalanine (Ser); by FlvM2. T44 carries the post-translational modification 2,3-didehydrobutyrine; by FlvM2. The beta-methyllanthionine (Thr-Cys); by FlvM2 cross-link spans 48–54; the sequence is TVRIEFC. Residues 56 to 59 constitute a cross-link (lanthionine (Ser-Cys); by FlvM2); the sequence is SAAC. A cross-link (beta-methyllanthionine (Thr-Cys); by FlvM2) is located at residues 60 to 63; the sequence is TYSC.

Contains LL-lanthionine, DL-lanthionine, and DL-beta-methyllanthionine, when coepressed in E.coli with the flavecin synthetase FlvM2.

The protein resides in the secreted. Its function is as follows. Lanthionine-containing peptide that does probably not show antibacterial activity, since its analog [+2]Flvbeta.h does not show antibacterial activity against M.luteus. Also does not show antibiotic activity when tested with [Del2]Flvalpha.a, an analog of Flvalpha.a, which is encoded by the same operon than Flvbeta.h. The bactericidal activity of lantibiotics is based on depolarization of energized bacterial cytoplasmic membranes, initiated by the formation of aqueous transmembrane pores. The chain is Lantipeptide Flvbeta.h from Ruminococcus flavefaciens.